A 146-amino-acid chain; its full sequence is Universal stress protein MT1672 (146 aa).

Belongs to the universal stress protein A family.

This chain is Universal stress protein MT1672, found in Mycobacterium tuberculosis (strain CDC 1551 / Oshkosh).